Here is a 258-residue protein sequence, read N- to C-terminus: Large ribosomal subunit protein bL21 (258 aa).

The segment covering 140-159 has biased composition (basic and acidic residues); the sequence is KAKDAKDEAPKAAPKAEKKK. The interval 140 to 181 is disordered; the sequence is KAKDAKDEAPKAAPKAEKKKAAPKKAKAEAAPAAADEGTRPA.

The protein belongs to the bacterial ribosomal protein bL21 family. In terms of assembly, part of the 50S ribosomal subunit. Contacts protein L20.

Its function is as follows. This protein binds to 23S rRNA in the presence of protein L20. In Jannaschia sp. (strain CCS1), this protein is Large ribosomal subunit protein bL21.